A 41-amino-acid polypeptide reads, in one-letter code: Large ribosomal subunit protein bL36 (41 aa).

This sequence belongs to the bacterial ribosomal protein bL36 family.

In Bartonella tribocorum (strain CIP 105476 / IBS 506), this protein is Large ribosomal subunit protein bL36.